A 430-amino-acid polypeptide reads, in one-letter code: MQASIESTGNLERRLTFTLPQERLETHVGGRLRELARTTRIKGFRPGKVPTKVIEQRFGQQVRAEAMEGLLRETFDSAVREHSLRLAGNPRIDQGESDFDFVATFEVVPDFGDIDVTNLSVVRHTAEVTDADIDQMIENLRLQRRTWNPVERGAQVGDLVALETWSQAGNERLPAEGVETGSSVLGSGVMFDQIEKGLEGLSKGEDKALSIDFPADWRVPQLAGKTVQVHVKAVEVSEPVLPEVNKEFIKSFGVKSGDAEQFRADIRTNLERELKGALMNRLRREVGEQLIAAYAHVEMPPRLVENEARSMLAQQVDQMRRSGRNPGEIPADAHQGFMDAAAKRVLVGLLVGEVARRNELRLESKRVSETLRLIASTYEEPEQVIEMYRNDPQLMSGLRSRVMEEQVIDWIAERAKHTEQSLSFQDAIRV.

Positions 157-242 (GDLVALETWS…AVEVSEPVLP (86 aa)) constitute a PPIase FKBP-type domain.

The protein belongs to the FKBP-type PPIase family. Tig subfamily.

The protein resides in the cytoplasm. It carries out the reaction [protein]-peptidylproline (omega=180) = [protein]-peptidylproline (omega=0). In terms of biological role, involved in protein export. Acts as a chaperone by maintaining the newly synthesized protein in an open conformation. Functions as a peptidyl-prolyl cis-trans isomerase. In Xanthomonas campestris pv. campestris (strain B100), this protein is Trigger factor.